The primary structure comprises 444 residues: Orexin receptor type 2 (444 aa).

Basic and acidic residues predominate over residues 1–10; sequence MSGTKLEDSP. The disordered stretch occupies residues 1-30; sequence MSGTKLEDSPPCRNWSSAPELNETQEPFLN. Over 1–54 the chain is Extracellular; it reads MSGTKLEDSPPCRNWSSAPELNETQEPFLNPTDYDDEEFLRYLWREYLHPKEYE. Asn-14 and Asn-22 each carry an N-linked (GlcNAc...) asparagine glycan. Over residues 14–27 the composition is skewed to polar residues; that stretch reads NWSSAPELNETQEP. A required for response to orexin-A region spans residues 33–49; that stretch reads DYDDEEFLRYLWREYLH. The chain crosses the membrane as a helical span at residues 55–75; that stretch reads WVLIAGYIIVFVVALIGNVLV. Residues 76 to 88 lie on the Cytoplasmic side of the membrane; it reads CVAVWKNHHMRTV. A helical transmembrane segment spans residues 89–110; that stretch reads TNYFIVNLSLADVLVTITCLPA. The Extracellular portion of the chain corresponds to 111–127; the sequence is TLVVDITETWFFGQSLC. Cysteines 127 and 210 form a disulfide. Residues 128-150 form a helical membrane-spanning segment; sequence KVIPYLQTVSVSVSVLTLSCIAL. Residues 151 to 170 are Cytoplasmic-facing; sequence DRWYAICHPLMFKSTAKRAR. A helical membrane pass occupies residues 171 to 191; the sequence is NSIVIIWIVSCIIMIPQAIVM. At 192-222 the chain is on the extracellular side; sequence ECSTMLPGLANKTTLFTVCDERWGGEIYPKM. The N-linked (GlcNAc...) asparagine glycan is linked to Asn-202. A helical transmembrane segment spans residues 223–243; that stretch reads YHICFFLVTYMAPLCLMVLAY. The Cytoplasmic portion of the chain corresponds to 244 to 304; sequence LQIFRKLWCR…QIRARRKTAR (61 aa). Residues 305–326 traverse the membrane as a helical segment; the sequence is MLMVVLLVFAICYLPISILNVL. Residues 327–342 lie on the Extracellular side of the membrane; the sequence is KRVFGMFTHTEDRETV. A helical transmembrane segment spans residues 343-366; that stretch reads YAWFTFSHWLVYANSAANPIIYNF. Residues 367–444 are Cytoplasmic-facing; the sequence is LSGKFREEFK…ANGAGQLQNW (78 aa).

This sequence belongs to the G-protein coupled receptor 1 family.

The protein localises to the cell membrane. Functionally, nonselective, high-affinity receptor for both orexin-A and orexin-B neuropeptides. Triggers an increase in cytoplasmic Ca(2+) levels in response to orexin-A binding. The chain is Orexin receptor type 2 (HCRTR2) from Sus scrofa (Pig).